A 423-amino-acid polypeptide reads, in one-letter code: LysM domain-containing GPI-anchored protein 3 (423 aa).

A signal peptide spans 1 to 24 (MKNPEKPLLLFLILASSLASMATA). 4 disulfide bridges follow: cysteine 31–cysteine 97, cysteine 37–cysteine 160, cysteine 95–cysteine 158, and cysteine 97–cysteine 160. The LysM 1 domain occupies 107–154 (THYKTRTSDTLGSIADSVYGGLVSPEQIQVANSETDLSVLDVGTKLVI). Residue asparagine 162 is glycosylated (N-linked (GlcNAc...) asparagine). Residues 173–216 (LSYVVRGIDTMAGIAKRFSTSVTDLTNVNAMGAPDINPGDILAV) enclose the LysM 2 domain. Intrachain disulfides connect cysteine 221–cysteine 253 and cysteine 248–cysteine 276. An N-linked (GlcNAc...) asparagine glycan is attached at asparagine 238. Asparagine 285 is a glycosylation site (N-linked (GlcNAc...) asparagine). Residue glycine 394 is the site of GPI-anchor amidated glycine attachment. Residues 395-423 (GSISIASCPLSYYSFIALLIPIGSCFFVF) constitute a propeptide, removed in mature form.

Interacts with peptidoglycans.

Its subcellular location is the cell membrane. Required as a cell surface receptor for peptidoglycan (PGN) elicitor signaling leading to innate immunity. Plays an essential role in detecting PGNs and restricting bacterial growth (of Pseudomonas syringae pv. tomato DC3000 for example). The polypeptide is LysM domain-containing GPI-anchored protein 3 (LYM3) (Arabidopsis thaliana (Mouse-ear cress)).